A 517-amino-acid polypeptide reads, in one-letter code: Beta-galactoside alpha-2,6-sialyltransferase 2 (517 aa).

Over 1–10 (MKPNLKQWKQ) the chain is Cytoplasmic. A helical; Signal-anchor for type II membrane protein transmembrane segment spans residues 11 to 31 (FMLFGICAWGLLFLVIFVYFT). Residues 32–517 (DSNSVEPVPS…IHCPIKDHIT (486 aa)) are Lumenal-facing. 3 N-linked (GlcNAc...) asparagine glycosylation sites follow: asparagine 201, asparagine 298, and asparagine 328. Intrachain disulfides connect cysteine 244/cysteine 510, cysteine 287/cysteine 439, and cysteine 457/cysteine 468.

The protein belongs to the glycosyltransferase 29 family.

The protein localises to the golgi apparatus. The protein resides in the golgi stack membrane. The enzyme catalyses a beta-D-galactoside + CMP-N-acetyl-beta-neuraminate = an N-acetyl-alpha-neuraminyl-(2-&gt;6)-beta-D-galactosyl derivative + CMP + H(+). Its function is as follows. Transfers sialic acid from the donor of substrate CMP-sialic acid to galactose containing acceptor substrates. This is Beta-galactoside alpha-2,6-sialyltransferase 2 (st6gal2) from Xenopus tropicalis (Western clawed frog).